We begin with the raw amino-acid sequence, 132 residues long: Small ribosomal subunit protein uS8 (132 aa).

This sequence belongs to the universal ribosomal protein uS8 family. In terms of assembly, part of the 30S ribosomal subunit. Contacts proteins S5 and S12.

Functionally, one of the primary rRNA binding proteins, it binds directly to 16S rRNA central domain where it helps coordinate assembly of the platform of the 30S subunit. The sequence is that of Small ribosomal subunit protein uS8 from Clostridium acetobutylicum (strain ATCC 824 / DSM 792 / JCM 1419 / IAM 19013 / LMG 5710 / NBRC 13948 / NRRL B-527 / VKM B-1787 / 2291 / W).